We begin with the raw amino-acid sequence, 347 residues long: UDP-3-O-acylglucosamine N-acyltransferase (347 aa).

Catalysis depends on histidine 242, which acts as the Proton acceptor.

The protein belongs to the transferase hexapeptide repeat family. LpxD subfamily. Homotrimer.

It carries out the reaction a UDP-3-O-[(3R)-3-hydroxyacyl]-alpha-D-glucosamine + a (3R)-hydroxyacyl-[ACP] = a UDP-2-N,3-O-bis[(3R)-3-hydroxyacyl]-alpha-D-glucosamine + holo-[ACP] + H(+). The protein operates within bacterial outer membrane biogenesis; LPS lipid A biosynthesis. Its function is as follows. Catalyzes the N-acylation of UDP-3-O-acylglucosamine using 3-hydroxyacyl-ACP as the acyl donor. Is involved in the biosynthesis of lipid A, a phosphorylated glycolipid that anchors the lipopolysaccharide to the outer membrane of the cell. In Dechloromonas aromatica (strain RCB), this protein is UDP-3-O-acylglucosamine N-acyltransferase.